The sequence spans 328 residues: Ketol-acid reductoisomerase (NADP(+)) (328 aa).

The 181-residue stretch at 2–182 folds into the KARI N-terminal Rossmann domain; the sequence is AKIYRDGDAS…GATRAGVIET (181 aa). Residues 25–28, Arg-48, Ser-53, and 83–86 each bind NADP(+); these read YGIQ and DMEQ. Residue His-108 is part of the active site. Gly-134 is a binding site for NADP(+). Residues 183-328 form the KARI C-terminal knotted domain; it reads TFAEETETDL…AEMRKLLFGP (146 aa). Mg(2+) is bound by residues Asp-191, Glu-195, Glu-227, and Glu-231. Residue Ser-252 coordinates substrate.

It belongs to the ketol-acid reductoisomerase family. Mg(2+) serves as cofactor.

The enzyme catalyses (2R)-2,3-dihydroxy-3-methylbutanoate + NADP(+) = (2S)-2-acetolactate + NADPH + H(+). It carries out the reaction (2R,3R)-2,3-dihydroxy-3-methylpentanoate + NADP(+) = (S)-2-ethyl-2-hydroxy-3-oxobutanoate + NADPH + H(+). It functions in the pathway amino-acid biosynthesis; L-isoleucine biosynthesis; L-isoleucine from 2-oxobutanoate: step 2/4. It participates in amino-acid biosynthesis; L-valine biosynthesis; L-valine from pyruvate: step 2/4. Involved in the biosynthesis of branched-chain amino acids (BCAA). Catalyzes an alkyl-migration followed by a ketol-acid reduction of (S)-2-acetolactate (S2AL) to yield (R)-2,3-dihydroxy-isovalerate. In the isomerase reaction, S2AL is rearranged via a Mg-dependent methyl migration to produce 3-hydroxy-3-methyl-2-ketobutyrate (HMKB). In the reductase reaction, this 2-ketoacid undergoes a metal-dependent reduction by NADPH to yield (R)-2,3-dihydroxy-isovalerate. This chain is Ketol-acid reductoisomerase (NADP(+)), found in Pyrobaculum calidifontis (strain DSM 21063 / JCM 11548 / VA1).